Here is a 165-residue protein sequence, read N- to C-terminus: Protein SprT (165 aa).

One can recognise a SprT-like domain in the interval 20–163 (EKLAQANLKL…RCVHCGEQLV (144 aa)). H78 is a Zn(2+) binding site. E79 is a catalytic residue. H82 lines the Zn(2+) pocket.

It belongs to the SprT family. Requires Zn(2+) as cofactor.

It is found in the cytoplasm. This is Protein SprT from Escherichia coli O127:H6 (strain E2348/69 / EPEC).